Consider the following 81-residue polypeptide: Sec-independent protein translocase protein TatA (81 aa).

A helical transmembrane segment spans residues 1-21 (MGSLSLWHWIIVGAVLLLLFG). The interval 41–81 (KKGLSEDDEKPEAARPAEPARSLDHQPVAEQPKVSETHRIG) is disordered.

The protein belongs to the TatA/E family. As to quaternary structure, the Tat system comprises two distinct complexes: a TatABC complex, containing multiple copies of TatA, TatB and TatC subunits, and a separate TatA complex, containing only TatA subunits. Substrates initially bind to the TatABC complex, which probably triggers association of the separate TatA complex to form the active translocon.

It is found in the cell inner membrane. Its function is as follows. Part of the twin-arginine translocation (Tat) system that transports large folded proteins containing a characteristic twin-arginine motif in their signal peptide across membranes. TatA could form the protein-conducting channel of the Tat system. The chain is Sec-independent protein translocase protein TatA from Beijerinckia indica subsp. indica (strain ATCC 9039 / DSM 1715 / NCIMB 8712).